Here is a 2495-residue protein sequence, read N- to C-terminus: Zinc finger protein 462 (2495 aa).

C2H2-type zinc fingers lie at residues 4 to 27 (LQCD…QDVH), 108 to 131 (FQCK…RKVH), and 162 to 185 (FSCQ…KMYH). A Glycyl lysine isopeptide (Lys-Gly) (interchain with G-Cter in SUMO1); alternate cross-link involves residue Lys-20. Lys-20 is covalently cross-linked (Glycyl lysine isopeptide (Lys-Gly) (interchain with G-Cter in SUMO2); alternate). The interaction with PBX1 stretch occupies residues 215–241 (PCKELPAEVVERSILESMVKPLTKSRG). Glycyl lysine isopeptide (Lys-Gly) (interchain with G-Cter in SUMO2) cross-links involve residues Lys-234 and Lys-271. 3 disordered regions span residues 278-301 (QQEG…NSTY), 329-357 (RPNS…NSGL), and 370-395 (DMTN…DLNE). A compositionally biased stretch (low complexity) spans 332 to 343 (SSSTSKFSSSMS). Glycyl lysine isopeptide (Lys-Gly) (interchain with G-Cter in SUMO2) cross-links involve residues Lys-337, Lys-348, and Lys-350. Phosphoserine occurs at positions 351 and 355. The segment covering 370-387 (DMTNSSADLDTNSMLNDS) has biased composition (polar residues). Lys-429 is covalently cross-linked (Glycyl lysine isopeptide (Lys-Gly) (interchain with G-Cter in SUMO2)). 2 consecutive C2H2-type zinc fingers follow at residues 440-463 (FQCP…ENIH) and 471-493 (YKCD…KQCH). A Glycyl lysine isopeptide (Lys-Gly) (interchain with G-Cter in SUMO2) cross-link involves residue Lys-485. Residues 492–590 (CHTGTSDWDT…PQPPTQAPPL (99 aa)) form a disordered region. A compositionally biased stretch (polar residues) spans 493 to 502 (HTGTSDWDTV). Low complexity predominate over residues 503-515 (NSQSESLSSSLNE). The segment covering 542–590 (PPQPPPPLPPPPPPPSQPLPQPPPPPLQSPHQVPPPTQQPQPPTQAPPL) has biased composition (pro residues). The segment at 593 to 616 (YKCTMCSYSTMTLKGLRVHQQHKH) adopts a C2H2-type 6 zinc-finger fold. Glycyl lysine isopeptide (Lys-Gly) (interchain with G-Cter in SUMO2) cross-links involve residues Lys-624, Lys-650, and Lys-661. The tract at residues 629–654 (PSSLPLENETDSHPSSSNTVKKSQTS) is disordered. The span at 641-654 (HPSSSNTVKKSQTS) shows a compositional bias: polar residues. Ser-681 carries the phosphoserine modification. Lys-699 participates in a covalent cross-link: Glycyl lysine isopeptide (Lys-Gly) (interchain with G-Cter in SUMO2). C2H2-type zinc fingers lie at residues 835 to 858 (YYCK…QRMH), 878 to 900 (YRCL…YGEH), and 917 to 940 (YRCR…QRMH). Lys-978 is covalently cross-linked (Glycyl lysine isopeptide (Lys-Gly) (interchain with G-Cter in SUMO2)). Residues 980–999 (MATSTPVARGGGLPATFNKN) form a disordered region. The segment at 1023–1046 (YDCDVCSFASPNMHSVLVHYQKKH) adopts a C2H2-type 10 zinc-finger fold. Ser-1083 is subject to Phosphoserine. Lys-1128 is covalently cross-linked (Glycyl lysine isopeptide (Lys-Gly) (interchain with G-Cter in SUMO2)). Ser-1159 carries the post-translational modification Phosphoserine. Residues Lys-1196, Lys-1204, Lys-1210, and Lys-1232 each participate in a glycyl lysine isopeptide (Lys-Gly) (interchain with G-Cter in SUMO2) cross-link. 2 C2H2-type zinc fingers span residues 1254–1277 (LKCR…KKDH) and 1459–1482 (YQCT…GKKH). Lys-1488 is covalently cross-linked (Glycyl lysine isopeptide (Lys-Gly) (interchain with G-Cter in SUMO2)). A C2H2-type 13 zinc finger spans residues 1504-1527 (YKCRHCPYINTRIHGVLTHYQKRH). Residues Lys-1560 and Lys-1580 each participate in a glycyl lysine isopeptide (Lys-Gly) (interchain with G-Cter in SUMO2) cross-link. 3 consecutive C2H2-type zinc fingers follow at residues 1566–1589 (YRCK…EKYH), 1649–1672 (FRCQ…RIKH), and 1686–1709 (FKCA…QKRH). Glycyl lysine isopeptide (Lys-Gly) (interchain with G-Cter in SUMO2) cross-links involve residues Lys-1687 and Lys-1769. Residues 1881–1903 (FQCKHCDSKLQSIAELTSHLNIH) form a C2H2-type 17 zinc finger. A Glycyl lysine isopeptide (Lys-Gly) (interchain with G-Cter in SUMO2) cross-link involves residue Lys-1935. The segment at 1957–1981 (YKCKFCVEVHPTLRAICNHLRKHVQ) adopts a C2H2-type 18; degenerate zinc-finger fold. At Lys-1993 the chain carries N6-methyllysine. 3 consecutive C2H2-type zinc fingers follow at residues 2014 to 2037 (YSCQ…QTHH), 2043 to 2066 (FRCK…LKAH), and 2072 to 2095 (YKCS…LKVH). A Glycyl lysine isopeptide (Lys-Gly) (interchain with G-Cter in SUMO2) cross-link involves residue Lys-2093. Composition is skewed to polar residues over residues 2112-2121 (SHAHPSSQKA) and 2132-2149 (DSSY…NHYQ). The interval 2112 to 2172 (SHAHPSSQKA…VPPSGTAAGT (61 aa)) is disordered. Ser-2161 and Ser-2166 each carry phosphoserine. C2H2-type zinc fingers lie at residues 2180-2203 (LHCE…RDKH), 2209-2232 (FKCK…EAGH), and 2243-2265 (LRCP…IVLH). Residue Lys-2282 forms a Glycyl lysine isopeptide (Lys-Gly) (interchain with G-Cter in SUMO2) linkage. 2 C2H2-type zinc fingers span residues 2289 to 2311 (FRCD…IEKH) and 2317 to 2340 (YKCQ…RDEH). A disordered region spans residues 2361-2387 (KEKIESSSSEDEDKDDEMSSKAEDREL). The span at 2377 to 2387 (EMSSKAEDREL) shows a compositional bias: basic and acidic residues. Residues 2403–2425 (FPCEFCGRAFSQGSEWERHVLRH) form a C2H2-type 27 zinc finger. Residue Lys-2493 forms a Glycyl lysine isopeptide (Lys-Gly) (interchain with G-Cter in SUMO2) linkage.

In terms of assembly, interacts with PBX1 isoform PBX1b; this interaction prevents PBX1-HOXA9 heterodimer from forming and binding to DNA. As to expression, expressed in the cerebral cortex (at protein level). Expressed in embryonic stem cells (at protein level). Expressed in heart, liver, kidney, muscle, and female and male genital tracts (at protein level).

The protein resides in the nucleus. In terms of biological role, zinc finger nuclear factor involved in transcription by regulating chromatin structure and organization. Involved in the pluripotency and differentiation of embryonic stem cells by regulating SOX2, POU5F1/OCT4, and NANOG. By binding PBX1, prevents the heterodimerization of PBX1 and HOXA9 and their binding to DNA. Regulates neuronal development and neural cell differentiation. This Mus musculus (Mouse) protein is Zinc finger protein 462.